Reading from the N-terminus, the 495-residue chain is ATP synthase subunit beta, chloroplastic (495 aa).

172–179 (GGAGVGKT) is an ATP binding site.

It belongs to the ATPase alpha/beta chains family. In terms of assembly, F-type ATPases have 2 components, CF(1) - the catalytic core - and CF(0) - the membrane proton channel. CF(1) has five subunits: alpha(3), beta(3), gamma(1), delta(1), epsilon(1). CF(0) has four main subunits: a(1), b(1), b'(1) and c(9-12).

Its subcellular location is the plastid. The protein resides in the chloroplast thylakoid membrane. It carries out the reaction ATP + H2O + 4 H(+)(in) = ADP + phosphate + 5 H(+)(out). Its function is as follows. Produces ATP from ADP in the presence of a proton gradient across the membrane. The catalytic sites are hosted primarily by the beta subunits. This chain is ATP synthase subunit beta, chloroplastic, found in Beaucarnea recurvata (Elephant-foot tree).